The following is a 647-amino-acid chain: Threonine--tRNA ligase (647 aa).

Positions 1–61 constitute a TGS domain; sequence MINITFPDGA…TEDGSIEIVT (61 aa). The catalytic stretch occupies residues 242 to 540; sequence DHRKLGKELD…LIENYKGAFP (299 aa). Zn(2+)-binding residues include C336, H387, and H517.

Belongs to the class-II aminoacyl-tRNA synthetase family. In terms of assembly, homodimer. Zn(2+) is required as a cofactor.

It is found in the cytoplasm. It catalyses the reaction tRNA(Thr) + L-threonine + ATP = L-threonyl-tRNA(Thr) + AMP + diphosphate + H(+). Its function is as follows. Catalyzes the attachment of threonine to tRNA(Thr) in a two-step reaction: L-threonine is first activated by ATP to form Thr-AMP and then transferred to the acceptor end of tRNA(Thr). Also edits incorrectly charged L-seryl-tRNA(Thr). The sequence is that of Threonine--tRNA ligase from Streptococcus pneumoniae (strain JJA).